Consider the following 909-residue polypeptide: Protein NLP1 (909 aa).

Disordered stretches follow at residues 51–71 (KSLK…DNSP), 536–556 (KEDP…PVPN), 568–605 (ASTP…RAKT), and 690–745 (NSPN…ENTG). A compositionally biased stretch (polar residues) spans 55 to 70 (QTEQSPSASTAMNDNS). The 82-residue stretch at 595–676 (RRPGEKKRAK…MDSVQGAQGS (82 aa)) folds into the RWP-RK domain. Residues 690–716 (NSPNMSSNGPSLKSNEQPSHLNAQTDN) show a composition bias toward polar residues. Residues 725–745 (RSPSSSCSKSSGSSNNNENTG) show a composition bias toward low complexity. The PB1 domain occupies 811–894 (AIKVKATFGE…HTIKISLNEA (84 aa)).

The protein resides in the nucleus. Its function is as follows. Probable transcription factor. The chain is Protein NLP1 (NLP1) from Arabidopsis thaliana (Mouse-ear cress).